Consider the following 538-residue polypeptide: MFS-type transporter oryC (538 aa).

6 helical membrane passes run 14-34 (LTGG…MSLF), 67-87 (TVTA…FTIG), 96-116 (ILLG…SFSL), 120-140 (FVGR…APIW), 162-182 (IFGF…GGSI), and 186-206 (FPLA…PWLP). N-linked (GlcNAc...) asparagine glycosylation is present at N268. 6 helical membrane-spanning segments follow: residues 288 to 308 (FGGI…SVGL), 315 to 335 (LLAA…VLLV), 342 to 362 (GLML…TILL), 379 to 399 (VAFF…VPWL), 416 to 436 (VATA…PIGI), and 443 to 463 (FWIV…FLYP). An N-linked (GlcNAc...) asparagine glycan is attached at N467.

This sequence belongs to the major facilitator superfamily. Sugar transporter (TC 2.A.1.1) family.

Its subcellular location is the membrane. Its function is as follows. MFS-type transporter; part of the gene cluster that mediates the biosynthesis of oryzines, natural products with an unusual maleidride backbone. This is MFS-type transporter oryC from Aspergillus oryzae (strain ATCC 42149 / RIB 40) (Yellow koji mold).